The primary structure comprises 409 residues: F-box/kelch-repeat protein At1g48625 (409 aa).

The F-box domain occupies 2–49 (ATMISNLPRDLMEEILSRVPLKSMRAVRLTCKNWHTLSITISESLAKM). Kelch repeat units follow at residues 169–218 (FIDY…LKGN) and 221–266 (WCAR…ILSC).

This chain is F-box/kelch-repeat protein At1g48625, found in Arabidopsis thaliana (Mouse-ear cress).